The chain runs to 308 residues: N-acetylmuramic acid 6-phosphate etherase (308 aa).

The 164-residue stretch at 63-226 folds into the SIS domain; it reads IVDAFACGGR…STASMIRSGK (164 aa). The Proton donor role is filled by Glu91. The active site involves Glu122.

Belongs to the GCKR-like family. MurNAc-6-P etherase subfamily. As to quaternary structure, homodimer.

The catalysed reaction is N-acetyl-D-muramate 6-phosphate + H2O = N-acetyl-D-glucosamine 6-phosphate + (R)-lactate. Its pathway is amino-sugar metabolism; 1,6-anhydro-N-acetylmuramate degradation. It functions in the pathway amino-sugar metabolism; N-acetylmuramate degradation. The protein operates within cell wall biogenesis; peptidoglycan recycling. Its function is as follows. Specifically catalyzes the cleavage of the D-lactyl ether substituent of MurNAc 6-phosphate, producing GlcNAc 6-phosphate and D-lactate. Together with AnmK, is also required for the utilization of anhydro-N-acetylmuramic acid (anhMurNAc) either imported from the medium or derived from its own cell wall murein, and thus plays a role in cell wall recycling. The sequence is that of N-acetylmuramic acid 6-phosphate etherase from Colwellia psychrerythraea (strain 34H / ATCC BAA-681) (Vibrio psychroerythus).